A 284-amino-acid chain; its full sequence is Phosphate import ATP-binding protein PstB 2 (284 aa).

Polar residues predominate over residues methionine 1–serine 22. The interval methionine 1–aspartate 29 is disordered. In terms of domain architecture, ABC transporter spans leucine 36 to isoleucine 278. Position 68–75 (glycine 68–threonine 75) interacts with ATP.

The protein belongs to the ABC transporter superfamily. Phosphate importer (TC 3.A.1.7) family. As to quaternary structure, the complex is composed of two ATP-binding proteins (PstB), two transmembrane proteins (PstC and PstA) and a solute-binding protein (PstS).

The protein resides in the cell membrane. The catalysed reaction is phosphate(out) + ATP + H2O = ADP + 2 phosphate(in) + H(+). In terms of biological role, part of the ABC transporter complex PstSACB involved in phosphate import. Responsible for energy coupling to the transport system. This is Phosphate import ATP-binding protein PstB 2 from Natronomonas pharaonis (strain ATCC 35678 / DSM 2160 / CIP 103997 / JCM 8858 / NBRC 14720 / NCIMB 2260 / Gabara) (Halobacterium pharaonis).